The sequence spans 600 residues: Proline--tRNA ligase (600 aa).

It belongs to the class-II aminoacyl-tRNA synthetase family. ProS type 1 subfamily. In terms of assembly, homodimer.

The protein resides in the cytoplasm. The catalysed reaction is tRNA(Pro) + L-proline + ATP = L-prolyl-tRNA(Pro) + AMP + diphosphate. Its function is as follows. Catalyzes the attachment of proline to tRNA(Pro) in a two-step reaction: proline is first activated by ATP to form Pro-AMP and then transferred to the acceptor end of tRNA(Pro). As ProRS can inadvertently accommodate and process non-cognate amino acids such as alanine and cysteine, to avoid such errors it has two additional distinct editing activities against alanine. One activity is designated as 'pretransfer' editing and involves the tRNA(Pro)-independent hydrolysis of activated Ala-AMP. The other activity is designated 'posttransfer' editing and involves deacylation of mischarged Ala-tRNA(Pro). The misacylated Cys-tRNA(Pro) is not edited by ProRS. This Prochlorococcus marinus (strain MIT 9312) protein is Proline--tRNA ligase.